The sequence spans 176 residues: ATP synthase subunit delta (176 aa).

It belongs to the ATPase delta chain family. In terms of assembly, F-type ATPases have 2 components, F(1) - the catalytic core - and F(0) - the membrane proton channel. F(1) has five subunits: alpha(3), beta(3), gamma(1), delta(1), epsilon(1). F(0) has three main subunits: a(1), b(2) and c(10-14). The alpha and beta chains form an alternating ring which encloses part of the gamma chain. F(1) is attached to F(0) by a central stalk formed by the gamma and epsilon chains, while a peripheral stalk is formed by the delta and b chains.

Its subcellular location is the cell inner membrane. In terms of biological role, f(1)F(0) ATP synthase produces ATP from ADP in the presence of a proton or sodium gradient. F-type ATPases consist of two structural domains, F(1) containing the extramembraneous catalytic core and F(0) containing the membrane proton channel, linked together by a central stalk and a peripheral stalk. During catalysis, ATP synthesis in the catalytic domain of F(1) is coupled via a rotary mechanism of the central stalk subunits to proton translocation. Its function is as follows. This protein is part of the stalk that links CF(0) to CF(1). It either transmits conformational changes from CF(0) to CF(1) or is implicated in proton conduction. The sequence is that of ATP synthase subunit delta from Actinobacillus succinogenes (strain ATCC 55618 / DSM 22257 / CCUG 43843 / 130Z).